A 112-amino-acid chain; its full sequence is UPF0482 protein SG1468 (112 aa).

Positions 1–22 (MNTIPTRCLLGGLLALSLLAYA) are cleaved as a signal peptide.

Belongs to the UPF0482 family.

In Sodalis glossinidius (strain morsitans), this protein is UPF0482 protein SG1468.